The sequence spans 136 residues: Large ribosomal subunit protein uL16 (136 aa).

Belongs to the universal ribosomal protein uL16 family. As to quaternary structure, part of the 50S ribosomal subunit.

In terms of biological role, binds 23S rRNA and is also seen to make contacts with the A and possibly P site tRNAs. This Aliivibrio salmonicida (strain LFI1238) (Vibrio salmonicida (strain LFI1238)) protein is Large ribosomal subunit protein uL16.